Here is a 155-residue protein sequence, read N- to C-terminus: MKLSTKGRYAMVALVDLALAQKSGNELVSLAEVSKRQDISLPYLEQLFVKLRRAGLVEAVRGPGGGYKLARPAESIRVSEIMEAVEETVNAMHTGAGASGGVSGSRAQSLTNRLWEGLSAHVYVFLHQTRLSDIIKNEMRPCPAVPALFRVVDED.

In terms of domain architecture, HTH rrf2-type spans 2–136 (KLSTKGRYAM…HQTRLSDIIK (135 aa)). A DNA-binding region (H-T-H motif) is located at residues 30 to 53 (LAEVSKRQDISLPYLEQLFVKLRR). The heme regulatory motif (HRM) stretch occupies residues 141 to 145 (PCPAV). A [2Fe-2S] cluster-binding site is contributed by C142.

[2Fe-2S] cluster is required as a cofactor.

Functionally, regulates the transcription of several operons and genes involved in the biogenesis of Fe-S clusters and Fe-S-containing proteins. Functions as a transcriptional repressor of genes involved in iron metabolism by directly binding to the promoter region of genes preceded by the Iron-Rhodo-box motif. Binds to iscR and hemP promoter regions independently of an Fe-S cluster, but their transcriptional repression is Fe-S cluster-dependent. Seems to activate some target genes in a Fe-S cluster-independent manner. Negatively regulates its own transcription in the presence of iron only. This chain is HTH-type transcriptional regulator IscR, found in Cereibacter sphaeroides (strain ATCC 17023 / DSM 158 / JCM 6121 / CCUG 31486 / LMG 2827 / NBRC 12203 / NCIMB 8253 / ATH 2.4.1.) (Rhodobacter sphaeroides).